The primary structure comprises 108 residues: UPF0060 membrane protein Mfla_0485 (108 aa).

The next 4 membrane-spanning stretches (helical) occupy residues 7–27 (FSLF…PYLW), 33–53 (SVWL…LLSL), 63–83 (AAYG…VDGI), and 87–107 (TWDF…MFAP).

This sequence belongs to the UPF0060 family.

The protein resides in the cell inner membrane. The protein is UPF0060 membrane protein Mfla_0485 of Methylobacillus flagellatus (strain ATCC 51484 / DSM 6875 / VKM B-1610 / KT).